We begin with the raw amino-acid sequence, 149 residues long: MEVIAENRKARFEYFILEEFEAGMVLLSSEVKSLRERKVNISDAYVTEKNGEIWLHNMHIAEYKAANKKKHKPKRERKLLLHKKEINKLISQIKTAGVTIVPLSIYFNDKGLVKTRIAIVKGKKLYDKRATIKQREWNRAKSRLSKNNL.

The protein belongs to the SmpB family.

Its subcellular location is the cytoplasm. Functionally, required for rescue of stalled ribosomes mediated by trans-translation. Binds to transfer-messenger RNA (tmRNA), required for stable association of tmRNA with ribosomes. tmRNA and SmpB together mimic tRNA shape, replacing the anticodon stem-loop with SmpB. tmRNA is encoded by the ssrA gene; the 2 termini fold to resemble tRNA(Ala) and it encodes a 'tag peptide', a short internal open reading frame. During trans-translation Ala-aminoacylated tmRNA acts like a tRNA, entering the A-site of stalled ribosomes, displacing the stalled mRNA. The ribosome then switches to translate the ORF on the tmRNA; the nascent peptide is terminated with the 'tag peptide' encoded by the tmRNA and targeted for degradation. The ribosome is freed to recommence translation, which seems to be the essential function of trans-translation. This is SsrA-binding protein from Wolbachia sp. subsp. Brugia malayi (strain TRS).